The sequence spans 901 residues: HTH-type transcriptional regulator MalT (901 aa).

39 to 46 (SPAGYGKT) serves as a coordination point for ATP. The 66-residue stretch at 829-894 (ELIRTSPLTQ…AAVQHAQKLL (66 aa)) folds into the HTH luxR-type domain. Residues 853–872 (NEQIAGELEVAATTIKTHIR) constitute a DNA-binding region (H-T-H motif).

This sequence belongs to the MalT family. Monomer in solution. Oligomerizes to an active state in the presence of the positive effectors ATP and maltotriose.

With respect to regulation, activated by ATP and maltotriose, which are both required for DNA binding. In terms of biological role, positively regulates the transcription of the maltose regulon whose gene products are responsible for uptake and catabolism of malto-oligosaccharides. Specifically binds to the promoter region of its target genes, recognizing a short DNA motif called the MalT box. This chain is HTH-type transcriptional regulator MalT, found in Shigella boydii serotype 4 (strain Sb227).